Consider the following 296-residue polypeptide: Polyamine aminopropyltransferase (296 aa).

The PABS domain maps to 5–238; the sequence is ELWYETLHAN…GIMTFAWATQ (234 aa). Glutamine 33 contacts S-methyl-5'-thioadenosine. 2 residues coordinate spermidine: histidine 64 and aspartate 88. Residues glutamate 108 and 140-141 each bind S-methyl-5'-thioadenosine; that span reads DG. Aspartate 158 (proton acceptor) is an active-site residue. 158–161 serves as a coordination point for spermidine; it reads DCTD. Proline 165 lines the S-methyl-5'-thioadenosine pocket.

Belongs to the spermidine/spermine synthase family. Homodimer or homotetramer.

The protein localises to the cytoplasm. It catalyses the reaction S-adenosyl 3-(methylsulfanyl)propylamine + putrescine = S-methyl-5'-thioadenosine + spermidine + H(+). It functions in the pathway amine and polyamine biosynthesis; spermidine biosynthesis; spermidine from putrescine: step 1/1. Its function is as follows. Catalyzes the irreversible transfer of a propylamine group from the amino donor S-adenosylmethioninamine (decarboxy-AdoMet) to putrescine (1,4-diaminobutane) to yield spermidine. This chain is Polyamine aminopropyltransferase, found in Yersinia pestis bv. Antiqua (strain Antiqua).